We begin with the raw amino-acid sequence, 365 residues long: tRNA-specific 2-thiouridylase MnmA (365 aa).

Residues 9–16 and Met-35 each bind ATP; that span reads GLSGGVDS. Residues 95–97 are interaction with target base in tRNA; sequence NPD. The Nucleophile role is filled by Cys-100. Cys-100 and Cys-196 are oxidised to a cystine. Position 124 (Gly-124) interacts with ATP. Positions 146-148 are interaction with tRNA; sequence KDQ. The active-site Cysteine persulfide intermediate is the Cys-196. Positions 315-316 are interaction with tRNA; that stretch reads RY.

Belongs to the MnmA/TRMU family.

Its subcellular location is the cytoplasm. The catalysed reaction is S-sulfanyl-L-cysteinyl-[protein] + uridine(34) in tRNA + AH2 + ATP = 2-thiouridine(34) in tRNA + L-cysteinyl-[protein] + A + AMP + diphosphate + H(+). Catalyzes the 2-thiolation of uridine at the wobble position (U34) of tRNA, leading to the formation of s(2)U34. In Dechloromonas aromatica (strain RCB), this protein is tRNA-specific 2-thiouridylase MnmA.